The primary structure comprises 485 residues: GTPase Der (485 aa).

EngA-type G domains follow at residues 3 to 167 and 176 to 349; these read PTIA…PEPE and PVFA…NAAM. Residues 9–16, 56–60, 119–122, 182–189, 229–233, and 294–297 contribute to the GTP site; these read GRPNVGKS, DTGGF, NKGE, DTAGV, and NKWD. Residues 350 to 434 enclose the KH-like domain; the sequence is IKMPTPKITR…PLRIQYNVSE (85 aa). The segment at 435-485 is disordered; sequence NPYENAEDKPKKKPLRRVSLSNRIEKREGRKEEKNRFKKKTKVSVKKQFSK. Residues 457 to 469 are compositionally biased toward basic and acidic residues; it reads RIEKREGRKEEKN. A compositionally biased stretch (basic residues) spans 470 to 485; sequence RFKKKTKVSVKKQFSK.

This sequence belongs to the TRAFAC class TrmE-Era-EngA-EngB-Septin-like GTPase superfamily. EngA (Der) GTPase family. In terms of assembly, associates with the 50S ribosomal subunit.

Functionally, GTPase that plays an essential role in the late steps of ribosome biogenesis. This chain is GTPase Der, found in Neisseria meningitidis serogroup B (strain ATCC BAA-335 / MC58).